We begin with the raw amino-acid sequence, 556 residues long: MSVSAFNRRWAAVILEALTRHGVRHICIAPGSRSTPLTLAAAENSAFIHHTHFDERGLGHLALGLAKVSKQPVAVIVTSGTAVANLYPALIEAGLTGEKLILLTADRPPELIDCGANQAIRQPGMFASHPTHSISLPRPTQDIPARWLVSTIDHALGTLHAGGVHINCPFAEPLYGEMDDTGLSWQQRLGDWWQDDKPWLREAPRLESEKQRDWFFWRQKRGVVVAGRMSAEEGKKVTLWAQTLGWPLIGDVLSQTGQPLPCADLWLGNAKAISELQQAQIVVQLGSSLTGKRLLQWQAICEPEEYWIVDDIEGRLDPAHHRGRRLIANIADWLEQHPAEKRQPWCVEIPRLAEQAMQAVIARRDAFGEAQLAHRISDYLPEQGQLFVGNSLVVRLIDALSQLPAGYPVYSNRGASGIDGLLSTAAGVQRASGKPTLAIVGDLSALYDLNALALLRQVSAPLVLIVVNNNGGQIFSLLPTPKNERERFYLMPQNVHFEHAAAMFELKYHRPQNWQELETALADAWRTPTTTVIEMVVNDTDGAQTLQQLLAQVSHL.

Belongs to the TPP enzyme family. MenD subfamily. Homodimer. Requires Mg(2+) as cofactor. Mn(2+) serves as cofactor. It depends on thiamine diphosphate as a cofactor.

The catalysed reaction is isochorismate + 2-oxoglutarate + H(+) = 5-enolpyruvoyl-6-hydroxy-2-succinyl-cyclohex-3-ene-1-carboxylate + CO2. It functions in the pathway quinol/quinone metabolism; 1,4-dihydroxy-2-naphthoate biosynthesis; 1,4-dihydroxy-2-naphthoate from chorismate: step 2/7. It participates in quinol/quinone metabolism; menaquinone biosynthesis. In terms of biological role, catalyzes the thiamine diphosphate-dependent decarboxylation of 2-oxoglutarate and the subsequent addition of the resulting succinic semialdehyde-thiamine pyrophosphate anion to isochorismate to yield 2-succinyl-5-enolpyruvyl-6-hydroxy-3-cyclohexene-1-carboxylate (SEPHCHC). The sequence is that of 2-succinyl-5-enolpyruvyl-6-hydroxy-3-cyclohexene-1-carboxylate synthase from Escherichia coli O17:K52:H18 (strain UMN026 / ExPEC).